A 116-amino-acid polypeptide reads, in one-letter code: Large ribosomal subunit protein bL17 (116 aa).

The protein belongs to the bacterial ribosomal protein bL17 family. As to quaternary structure, part of the 50S ribosomal subunit. Contacts protein L32.

The chain is Large ribosomal subunit protein bL17 from Parasynechococcus marenigrum (strain WH8102).